Consider the following 37-residue polypeptide: Bacteriocin lactococcin MMFII (37 aa).

Cysteines 9 and 14 form a disulfide.

The protein resides in the secreted. In terms of biological role, bacteriocin active against Listeria monocytogenes and Lactococcus cremoris. This Lactococcus lactis subsp. lactis (Streptococcus lactis) protein is Bacteriocin lactococcin MMFII.